Consider the following 313-residue polypeptide: Methionyl-tRNA formyltransferase (313 aa).

S109 to P112 provides a ligand contact to (6S)-5,6,7,8-tetrahydrofolate.

This sequence belongs to the Fmt family.

The catalysed reaction is L-methionyl-tRNA(fMet) + (6R)-10-formyltetrahydrofolate = N-formyl-L-methionyl-tRNA(fMet) + (6S)-5,6,7,8-tetrahydrofolate + H(+). Attaches a formyl group to the free amino group of methionyl-tRNA(fMet). The formyl group appears to play a dual role in the initiator identity of N-formylmethionyl-tRNA by promoting its recognition by IF2 and preventing the misappropriation of this tRNA by the elongation apparatus. This chain is Methionyl-tRNA formyltransferase, found in Thermotoga maritima (strain ATCC 43589 / DSM 3109 / JCM 10099 / NBRC 100826 / MSB8).